A 181-amino-acid polypeptide reads, in one-letter code: Oligoribonuclease (181 aa).

The 164-residue stretch at 8–171 (LIWIDMEMTG…ADIYDSIEEL (164 aa)) folds into the Exonuclease domain. Tyr129 is an active-site residue.

Belongs to the oligoribonuclease family.

It is found in the cytoplasm. Functionally, 3'-to-5' exoribonuclease specific for small oligoribonucleotides. This chain is Oligoribonuclease, found in Nitrosomonas eutropha (strain DSM 101675 / C91 / Nm57).